The chain runs to 375 residues: SAP-like protein BP-73 (375 aa).

3 disordered regions span residues 46–113, 130–233, and 257–315; these read PNNH…VPGE, RARG…VKFQ, and TLEN…PSLQ. A compositionally biased stretch (basic residues) spans 59-70; that stretch reads HQKGGSARRKSK. Residues 76-86 show a composition bias toward acidic residues; that stretch reads DDSENIDEFDT. A compositionally biased stretch (polar residues) spans 88 to 109; that stretch reads IMSSKNGPPISLTSNSRPQATS. Composition is skewed to basic and acidic residues over residues 134 to 152 and 163 to 186; these read KGKEEKKPEQAKAQGERGS and HSVDQRRKSGDEKEQSVDQTKRSN. The span at 187–197 shows a compositional bias: polar residues; that stretch reads ESGNKQNSSIF. The span at 295–311 shows a compositional bias: acidic residues; the sequence is DEPDASDTDEPSGEYDE. The interaction with WAXY stretch occupies residues 338 to 375; the sequence is DLSTLKVTELRELAKSRGIKGYSKMKKNDLVELLSNMA.

In terms of assembly, binds to the DNA in the promoter region of WAXY containing the sequence 5'-ACGCACGCTAACGTGA-3'. In terms of tissue distribution, expressed in tissues with high cell division activities: in root tips, stem node, panicle, flower and immature seed. Weakly expressed in root and leaf.

Functionally, may regulate cell proliferation and plant growth. The chain is SAP-like protein BP-73 (BP-73) from Oryza sativa subsp. japonica (Rice).